The primary structure comprises 115 residues: Large ribosomal subunit protein bL19 (115 aa).

The protein belongs to the bacterial ribosomal protein bL19 family.

Its function is as follows. This protein is located at the 30S-50S ribosomal subunit interface and may play a role in the structure and function of the aminoacyl-tRNA binding site. The protein is Large ribosomal subunit protein bL19 of Clostridium kluyveri (strain ATCC 8527 / DSM 555 / NBRC 12016 / NCIMB 10680 / K1).